A 338-amino-acid polypeptide reads, in one-letter code: Glycerol-3-phosphate dehydrogenase [NAD(P)+] (338 aa).

Positions 18, 19, 39, and 113 each coordinate NADPH. 3 residues coordinate sn-glycerol 3-phosphate: Lys113, Gly142, and Thr144. Ala146 is an NADPH binding site. Residues Lys198, Asp251, Ser261, Arg262, and Asn263 each contribute to the sn-glycerol 3-phosphate site. Lys198 functions as the Proton acceptor in the catalytic mechanism. Residue Arg262 participates in NADPH binding. NADPH-binding residues include Val286 and Glu288.

Belongs to the NAD-dependent glycerol-3-phosphate dehydrogenase family.

The protein resides in the cytoplasm. It carries out the reaction sn-glycerol 3-phosphate + NAD(+) = dihydroxyacetone phosphate + NADH + H(+). The catalysed reaction is sn-glycerol 3-phosphate + NADP(+) = dihydroxyacetone phosphate + NADPH + H(+). It functions in the pathway membrane lipid metabolism; glycerophospholipid metabolism. Its function is as follows. Catalyzes the reduction of the glycolytic intermediate dihydroxyacetone phosphate (DHAP) to sn-glycerol 3-phosphate (G3P), the key precursor for phospholipid synthesis. In Photobacterium profundum (strain SS9), this protein is Glycerol-3-phosphate dehydrogenase [NAD(P)+].